The following is a 609-amino-acid chain: Chaperone protein DnaK (609 aa).

A Phosphothreonine; by autocatalysis modification is found at Thr173. Residues 525-542 (ENISDEDKKNAEEKKDAL) are compositionally biased toward basic and acidic residues. Disordered stretches follow at residues 525–554 (ENISDEDKKNAEEKKDALKTALEGEDIDDI) and 574–609 (EQAQQAQQQGQEEQGSQDSTVEDADFKEVKDDEDKK). Residues 574 to 587 (EQAQQAQQQGQEEQ) are compositionally biased toward low complexity. The segment covering 597–609 (ADFKEVKDDEDKK) has biased composition (basic and acidic residues).

This sequence belongs to the heat shock protein 70 family.

Functionally, acts as a chaperone. The chain is Chaperone protein DnaK from Staphylococcus epidermidis (strain ATCC 35984 / DSM 28319 / BCRC 17069 / CCUG 31568 / BM 3577 / RP62A).